Consider the following 472-residue polypeptide: GTPase Der (472 aa).

EngA-type G domains follow at residues 3–166 (AVIA…PPAE) and 178–351 (IPVA…AAAH). Residues 9 to 16 (GRPNVGKS), 56 to 60 (DTGGM), 118 to 121 (NKTD), 184 to 191 (GRPNVGKS), 231 to 235 (DTAGV), and 296 to 299 (NKWD) each bind GTP. The 85-residue stretch at 352–436 (RDLATPELND…PVRIECRASD (85 aa)) folds into the KH-like domain. The tract at residues 434–472 (ASDNPFADKPNQLTERQRRRRQRVIHHAKKREKKRKRRR) is disordered. The span at 450–472 (QRRRRQRVIHHAKKREKKRKRRR) shows a compositional bias: basic residues.

It belongs to the TRAFAC class TrmE-Era-EngA-EngB-Septin-like GTPase superfamily. EngA (Der) GTPase family. As to quaternary structure, associates with the 50S ribosomal subunit.

Its function is as follows. GTPase that plays an essential role in the late steps of ribosome biogenesis. The polypeptide is GTPase Der (Halorhodospira halophila (strain DSM 244 / SL1) (Ectothiorhodospira halophila (strain DSM 244 / SL1))).